The following is an 840-amino-acid chain: V-type proton ATPase 116 kDa subunit a 4 (840 aa).

Over 1–390 (MVSVFRSEEM…DAYGVGSYRE (390 aa)) the chain is Cytoplasmic. A helical membrane pass occupies residues 391–409 (INPAPYTIITFPFLFAVMF). Residues 410–411 (GD) are Vacuolar-facing. Residues 412–428 (CGHGTVMLLAALWMILN) traverse the membrane as a helical segment. At 429–443 (ERRLLSQKTDNEIWN) the chain is on the cytoplasmic side. The helical transmembrane segment at 444-473 (TFFHGRYLILLMGIFSIYTGLIYNDCFSKS) threads the bilayer. Topologically, residues 474–538 (LNIFGSSWSV…ASNKLTFLNS (65 aa)) are vacuolar. A helical transmembrane segment spans residues 539–558 (YKMKMSVILGIVQMVFGVIL). At 559–576 (SLFNHIYFRRTLNIILQF) the chain is on the cytoplasmic side. Residues 577–597 (IPEMIFILCLFGYLVFMIIFK) traverse the membrane as a helical segment. Residues 598 to 642 (WCCFDVHVSQHAPSILIHFINMFLFNYSDSSNAPLYKHQQEVQSF) are Vacuolar-facing. A helical membrane pass occupies residues 643–662 (FVVMALISVPWMLLIKPFIL). Residues 663-727 (RASHRKSQLQ…DVFVHQAIHT (65 aa)) lie on the Cytoplasmic side of the membrane. The disordered stretch occupies residues 675-704 (RIQEDATENIEGDSSSPSSRSGQRTSADTH). The chain crosses the membrane as a helical span at residues 728 to 752 (IEYCLGCISNTASYLRLWALSLAHA). Over 753-773 (QLSEVLWTMVMNSGLQTRGWG) the chain is Vacuolar. The helical transmembrane segment at 774–812 (GIVGVFIIFAVFAVLTVAILLIMEGLSAFLHALRLHWVE) threads the bilayer. Topologically, residues 813–840 (FQNKFYVGDGYKFSPFSFKHILDGTAEE) are cytoplasmic.

This sequence belongs to the V-ATPase 116 kDa subunit family. As to quaternary structure, V-ATPase is a heteromultimeric enzyme made up of two complexes: the ATP-hydrolytic V1 complex and the proton translocation V0 complex. The V1 complex consists of three catalytic AB heterodimers that form a heterohexamer, three peripheral stalks each consisting of EG heterodimers, one central rotor including subunits D and F, and the regulatory subunits C and H. The proton translocation complex V0 consists of the proton transport subunit a, a ring of proteolipid subunits c9c'', rotary subunit d, subunits e and f, and the accessory subunits ATP6AP1/Ac45 and ATP6AP2/PRR. Interacts with the V1 complex V-ATPase subunit A ATP6V1A. Interacts with the V0 complex V-ATPase subunit c ATP6V0C. As to expression, expressed in adult and fetal kidney. Found in the inner ear.

The protein localises to the apical cell membrane. It is found in the basolateral cell membrane. In terms of biological role, subunit of the V0 complex of vacuolar(H+)-ATPase (V-ATPase), a multisubunit enzyme composed of a peripheral complex (V1) that hydrolyzes ATP and a membrane integral complex (V0) that translocates protons. V-ATPase is responsible for acidifying and maintaining the pH of intracellular compartments and in some cell types, is targeted to the plasma membrane, where it is responsible for acidifying the extracellular environment. Involved in normal vectorial acid transport into the urine by the kidney. The chain is V-type proton ATPase 116 kDa subunit a 4 (ATP6V0A4) from Homo sapiens (Human).